A 682-amino-acid polypeptide reads, in one-letter code: DNA-directed RNA polymerase subunit beta' (682 aa).

4 residues coordinate Zn(2+): Cys69, Cys71, Cys87, and Cys90. Positions 491, 493, and 495 each coordinate Mg(2+).

This sequence belongs to the RNA polymerase beta' chain family. RpoC1 subfamily. In terms of assembly, in plastids the minimal PEP RNA polymerase catalytic core is composed of four subunits: alpha, beta, beta', and beta''. When a (nuclear-encoded) sigma factor is associated with the core the holoenzyme is formed, which can initiate transcription. Mg(2+) is required as a cofactor. Zn(2+) serves as cofactor.

It is found in the plastid. The protein resides in the chloroplast. It catalyses the reaction RNA(n) + a ribonucleoside 5'-triphosphate = RNA(n+1) + diphosphate. Its function is as follows. DNA-dependent RNA polymerase catalyzes the transcription of DNA into RNA using the four ribonucleoside triphosphates as substrates. The chain is DNA-directed RNA polymerase subunit beta' from Lotus japonicus (Lotus corniculatus var. japonicus).